We begin with the raw amino-acid sequence, 332 residues long: 4-hydroxy-3-methylbut-2-enyl diphosphate reductase (332 aa).

Cysteine 34 contacts [4Fe-4S] cluster. (2E)-4-hydroxy-3-methylbut-2-enyl diphosphate-binding residues include histidine 63 and histidine 96. Dimethylallyl diphosphate is bound by residues histidine 63 and histidine 96. 2 residues coordinate isopentenyl diphosphate: histidine 63 and histidine 96. Cysteine 118 lines the [4Fe-4S] cluster pocket. A (2E)-4-hydroxy-3-methylbut-2-enyl diphosphate-binding site is contributed by histidine 146. Dimethylallyl diphosphate is bound at residue histidine 146. An isopentenyl diphosphate-binding site is contributed by histidine 146. Glutamate 148 acts as the Proton donor in catalysis. Residue threonine 186 participates in (2E)-4-hydroxy-3-methylbut-2-enyl diphosphate binding. A [4Fe-4S] cluster-binding site is contributed by cysteine 216. Serine 244, serine 245, asparagine 246, and serine 289 together coordinate (2E)-4-hydroxy-3-methylbut-2-enyl diphosphate. Positions 244, 245, 246, and 289 each coordinate dimethylallyl diphosphate. Isopentenyl diphosphate-binding residues include serine 244, serine 245, asparagine 246, and serine 289.

The protein belongs to the IspH family. [4Fe-4S] cluster serves as cofactor.

The enzyme catalyses isopentenyl diphosphate + 2 oxidized [2Fe-2S]-[ferredoxin] + H2O = (2E)-4-hydroxy-3-methylbut-2-enyl diphosphate + 2 reduced [2Fe-2S]-[ferredoxin] + 2 H(+). It carries out the reaction dimethylallyl diphosphate + 2 oxidized [2Fe-2S]-[ferredoxin] + H2O = (2E)-4-hydroxy-3-methylbut-2-enyl diphosphate + 2 reduced [2Fe-2S]-[ferredoxin] + 2 H(+). It functions in the pathway isoprenoid biosynthesis; dimethylallyl diphosphate biosynthesis; dimethylallyl diphosphate from (2E)-4-hydroxy-3-methylbutenyl diphosphate: step 1/1. It participates in isoprenoid biosynthesis; isopentenyl diphosphate biosynthesis via DXP pathway; isopentenyl diphosphate from 1-deoxy-D-xylulose 5-phosphate: step 6/6. In terms of biological role, catalyzes the conversion of 1-hydroxy-2-methyl-2-(E)-butenyl 4-diphosphate (HMBPP) into a mixture of isopentenyl diphosphate (IPP) and dimethylallyl diphosphate (DMAPP). Acts in the terminal step of the DOXP/MEP pathway for isoprenoid precursor biosynthesis. The protein is 4-hydroxy-3-methylbut-2-enyl diphosphate reductase of Mycobacterium ulcerans (strain Agy99).